The sequence spans 191 residues: Fe/S biogenesis protein NfuA (191 aa).

[4Fe-4S] cluster-binding residues include C149 and C152.

Belongs to the NfuA family. As to quaternary structure, homodimer. Requires [4Fe-4S] cluster as cofactor.

In terms of biological role, involved in iron-sulfur cluster biogenesis. Binds a 4Fe-4S cluster, can transfer this cluster to apoproteins, and thereby intervenes in the maturation of Fe/S proteins. Could also act as a scaffold/chaperone for damaged Fe/S proteins. The protein is Fe/S biogenesis protein NfuA of Buchnera aphidicola subsp. Baizongia pistaciae (strain Bp).